The chain runs to 514 residues: Deoxynucleoside triphosphate triphosphohydrolase SAMHD1 homolog (514 aa).

A disordered region spans residues 1-24; that stretch reads MNNTFKYVNEDVSGTEGEESDYDP. K80 lines the GTP pocket. N83 is an a 2'-deoxyribonucleoside 5'-triphosphate binding site. Position 101-109 (101-109) interacts with GTP; the sequence is DTEQFQRLR. The substrate site is built by Q113 and R128. The HD domain occupies 128–259; the sequence is RFEHSIGVSH…SVDVDKFDYL (132 aa). The Zn(2+) site is built by H131, H170, and D171. Position 174 (H174) interacts with substrate. H196 is an active-site residue. Substrate contacts are provided by residues 252-258, Y258, and D262; that span reads DVDKFDY. Residue D254 coordinates Zn(2+). A 2'-deoxyribonucleoside 5'-triphosphate is bound by residues R276, 291 to 293, and N297; that span reads LSK. Substrate-binding positions include R305 and 309 to 314; that span reads HKLVYT. A 2'-deoxyribonucleoside 5'-triphosphate contacts are provided by H315 and K316. Residues R380 and K384 each coordinate GTP.

It belongs to the SAMHD1 family. As to quaternary structure, homodimer; in absence of GTP and dNTP. Homotetramer; in GTP- and dNTP-bound form. The cofactor is Zn(2+).

The catalysed reaction is a 2'-deoxyribonucleoside 5'-triphosphate + H2O = a 2'-deoxyribonucleoside + triphosphate + H(+). With respect to regulation, allosterically activated and regulated via the combined actions of GTP and dNTPs (dATP, dGTP, dTTP and dCTP): Allosteric site 1 binds GTP, while allosteric site 2 binds dNTP. Allosteric activation promotes the formation of highly active homotetramers. Functionally, has deoxynucleoside triphosphate (dNTPase) activity. The protein is Deoxynucleoside triphosphate triphosphohydrolase SAMHD1 homolog of Dictyostelium discoideum (Social amoeba).